The chain runs to 218 residues: tRNA (guanine-N(7)-)-methyltransferase (218 aa).

Positions 46, 71, 98, and 120 each coordinate S-adenosyl-L-methionine. Residue aspartate 120 is part of the active site. Position 124 (lysine 124) interacts with substrate. The segment at 126–131 (RHEKRR) is interaction with RNA. Substrate is bound by residues aspartate 156 and 196 to 199 (TEYE).

The protein belongs to the class I-like SAM-binding methyltransferase superfamily. TrmB family.

It carries out the reaction guanosine(46) in tRNA + S-adenosyl-L-methionine = N(7)-methylguanosine(46) in tRNA + S-adenosyl-L-homocysteine. The protein operates within tRNA modification; N(7)-methylguanine-tRNA biosynthesis. Catalyzes the formation of N(7)-methylguanine at position 46 (m7G46) in tRNA. This is tRNA (guanine-N(7)-)-methyltransferase from Lactobacillus johnsonii (strain CNCM I-12250 / La1 / NCC 533).